Here is a 194-residue protein sequence, read N- to C-terminus: Protein ORF31 (194 aa).

An N-terminal signal peptide occupies residues 1-25 (MKSVASPLCQFHGVFCLYQCRQCLA).

This sequence belongs to the herpesviridae UL92 family. In terms of assembly, interacts with ORF34.

It is found in the host nucleus. It localises to the host cytoplasm. Plays an important role in the expression of late genes. May play a role in viral replication. The sequence is that of Protein ORF31 (ORF31) from Homo sapiens (Human).